Reading from the N-terminus, the 291-residue chain is POU class 2 homeobox associating-factor 2 (291 aa).

The 23-residue stretch at Lys-7–Arg-29 folds into the OCA domain. Residues Ala-176 to Leu-219 form a disordered region. Residues Ser-200–Ser-211 are compositionally biased toward low complexity.

This sequence belongs to the POU2AF family.

Its function is as follows. Transcriptional coactivator that may regulate cell type-specific differentiation pathways. In Danio rerio (Zebrafish), this protein is POU class 2 homeobox associating-factor 2 (pou2af2).